Here is a 553-residue protein sequence, read N- to C-terminus: Glucose-6-phosphate isomerase (553 aa).

Glu-357 (proton donor) is an active-site residue. Active-site residues include His-388 and Lys-514. Positions 527–553 (ADSPAAQSDSSTDALVRRYRTERGRTA) are disordered. The segment covering 541–553 (LVRRYRTERGRTA) has biased composition (basic and acidic residues).

This sequence belongs to the GPI family.

Its subcellular location is the cytoplasm. It carries out the reaction alpha-D-glucose 6-phosphate = beta-D-fructose 6-phosphate. The protein operates within carbohydrate biosynthesis; gluconeogenesis. Its pathway is carbohydrate degradation; glycolysis; D-glyceraldehyde 3-phosphate and glycerone phosphate from D-glucose: step 2/4. Catalyzes the reversible isomerization of glucose-6-phosphate to fructose-6-phosphate. The protein is Glucose-6-phosphate isomerase of Mycolicibacterium vanbaalenii (strain DSM 7251 / JCM 13017 / BCRC 16820 / KCTC 9966 / NRRL B-24157 / PYR-1) (Mycobacterium vanbaalenii).